Here is a 309-residue protein sequence, read N- to C-terminus: Mitochondrial brown fat uncoupling protein 1 (309 aa).

The Mitochondrial intermembrane segment spans residues 2 to 10; that stretch reads VGHTESDVP. Residues 11 to 32 traverse the membrane as a helical segment; sequence PTMAVKIFSAGVAACVADIITF. Solcar repeat units lie at residues 11–106, 113–203, and 212–297; these read PTMA…VQEF, ASLG…MKEA, and DDVP…LKQE. At 33–77 the chain is on the mitochondrial matrix side; that stretch reads PLDTAKVRLQVGSAIQGECLISSAIRYKGVLGTIITLAKTEGPVK. Residue lysine 60 participates in fatty acid 16:0 binding. A helical transmembrane segment spans residues 78-100; that stretch reads LYSGLPAGLQRQISFASLRIGLY. Topologically, residues 101-118 are mitochondrial intermembrane; that stretch reads DTVQEFFTTGKEASLGSK. The chain crosses the membrane as a helical span at residues 119–135; that stretch reads ISAGLMTGGVAVFIGQP. The Mitochondrial matrix portion of the chain corresponds to 136–180; sequence TEVVKVRLQAQSHLHGPKPRYTGTYNAYRIIATTEGLTGLWKGTT. A helical transmembrane segment spans residues 181-197; that stretch reads PNLTRNVIINCTELVTY. Topologically, residues 198-214 are mitochondrial intermembrane; sequence DLMKEALVKNKLLADDV. The chain crosses the membrane as a helical span at residues 215–234; it reads PCHFVSAVVAGFCTTVLSSP. Topologically, residues 235–268 are mitochondrial matrix; it reads VDVVKTRFVNSSPGQYTSVPNCAMMMLTREGPSA. Cysteine 256 is subject to Cysteine sulfenic acid (-SOH). Residues 269-291 traverse the membrane as a helical segment; that stretch reads FFKGFVPSFLRLGSWNIIMFVCF. Fatty acid 16:0 is bound at residue lysine 271. The Mitochondrial intermembrane portion of the chain corresponds to 292-309; it reads EQLKQELMKSRHTMDCAT.

This sequence belongs to the mitochondrial carrier (TC 2.A.29) family. Most probably functions as a monomer. Binds one purine nucleotide per monomer. However, has also been suggested to function as a homodimer or a homotetramer. Tightly associates with cardiolipin in the mitochondrion inner membrane; may stabilize and regulate its activity. In terms of processing, may undergo sulfenylation upon cold exposure. May increase the sensitivity of UCP1 thermogenic function to the activation by noradrenaline probably through structural effects. Post-translationally, may undergo ubiquitin-mediated proteasomal degradation.

The protein resides in the mitochondrion inner membrane. It carries out the reaction H(+)(in) = H(+)(out). With respect to regulation, has no constitutive proton transporter activity and has to be activated by long-chain fatty acids/LCFAs. Inhibited by purine nucleotides. Both purine nucleotides and LCFAs bind the cytosolic side of the transporter and directly compete to activate or inhibit it. Activated by noradrenaline and reactive oxygen species. Despite lacking canonical translational encoding for selenocysteine, a small pool of the protein has been observed to selectively incorporate selenocysteine at 'Cys-256'. Selenocysteine-modified protein is highly sensitive to redox modification and may constitute a pool of protein highly sensitive to activation by elevated levels of reactive oxygen species (ROS). In terms of biological role, mitochondrial protein responsible for thermogenic respiration, a specialized capacity of brown adipose tissue and beige fat that participates in non-shivering adaptive thermogenesis to temperature and diet variations and more generally to the regulation of energy balance. Functions as a long-chain fatty acid/LCFA and proton symporter, simultaneously transporting one LCFA and one proton through the inner mitochondrial membrane. However, LCFAs remaining associated with the transporter via their hydrophobic tails, it results in an apparent transport of protons activated by LCFAs. Thereby, dissipates the mitochondrial proton gradient and converts the energy of substrate oxydation into heat instead of ATP. Regulates the production of reactive oxygen species/ROS by mitochondria. This Bos taurus (Bovine) protein is Mitochondrial brown fat uncoupling protein 1.